The chain runs to 91 residues: Large ribosomal subunit protein bL31B (91 aa).

The protein belongs to the bacterial ribosomal protein bL31 family. Type B subfamily. Part of the 50S ribosomal subunit.

The sequence is that of Large ribosomal subunit protein bL31B from Mycolicibacterium vanbaalenii (strain DSM 7251 / JCM 13017 / BCRC 16820 / KCTC 9966 / NRRL B-24157 / PYR-1) (Mycobacterium vanbaalenii).